The primary structure comprises 196 residues: Probable nicotinate-nucleotide adenylyltransferase (196 aa).

The protein belongs to the NadD family.

It carries out the reaction nicotinate beta-D-ribonucleotide + ATP + H(+) = deamido-NAD(+) + diphosphate. The protein operates within cofactor biosynthesis; NAD(+) biosynthesis; deamido-NAD(+) from nicotinate D-ribonucleotide: step 1/1. Its function is as follows. Catalyzes the reversible adenylation of nicotinate mononucleotide (NaMN) to nicotinic acid adenine dinucleotide (NaAD). The sequence is that of Probable nicotinate-nucleotide adenylyltransferase from Caldicellulosiruptor saccharolyticus (strain ATCC 43494 / DSM 8903 / Tp8T 6331).